Reading from the N-terminus, the 372-residue chain is Long-tail fiber protein gp35 (372 aa).

One can recognise a GG-type lectin domain in the interval 22 to 193 (NSVRYKISIA…VGATGFPRGT (172 aa)).

The long-tail fibers are trimeric, with a stoichiometry of gp34/gp37/gp36/gp35 of 3:3:3:1.

It localises to the virion. Its function is as follows. Structural component of the distal-half of the long-tail fiber. The long-tail fiber of T4 is about 1600 Angstroms long with a kink in the middle that divides the fiber into proximal and distal halves. The latter hinge is probably composed of gp35 protein. The polypeptide is Long-tail fiber protein gp35 (35) (Enterobacteria phage T4 (Bacteriophage T4)).